Reading from the N-terminus, the 196-residue chain is DFEYLQLVLTWPASFCYANHCERIAPNNFTIHGLWPDNVKTRLHNCKPKPTYSYFTGKMLNDLDKHWMQLKFEQDYGRTEQPSWKYQYIKHGSCCQKRYNQNTYFGLALRLKDKFDLLRTLQTHRIIPGSSYTFQDIFDAIKTVSQENPDIKCAEVTKGTPELYEIGICFTPNADSMFRCPQSDTCDKTAKVLFRR.

Cys-16 and Cys-21 are disulfide-bonded. Asn-28 carries an N-linked (GlcNAc...) asparagine glycan. His-32 (proton donor) is an active-site residue. Residues His-32 and 69–70 (QL) contribute to the RNA site. Disulfide bonds link Cys-46–Cys-94, Cys-153–Cys-186, and Cys-169–Cys-180. The active site involves Gln-87. An RNA-binding site is contributed by 90 to 91 (KH). The active-site Proton acceptor is the His-91.

The protein belongs to the RNase T2 family. As to quaternary structure, monomer.

Its subcellular location is the secreted. It is found in the extracellular space. The catalysed reaction is a ribonucleotidyl-ribonucleotide-RNA + H2O = a 3'-end 3'-phospho-ribonucleotide-RNA + a 5'-end dephospho-ribonucleoside-RNA + H(+). Its function is as follows. Self-incompatibility (SI) is the inherited ability of a flowering plant to prevent self-fertilization by discriminating between self and non-self pollen during pollination. In many species of the Solanaceae, self-incompatibility is controlled by the single, multiallelic locus S. The protein is Ribonuclease S-F11 of Nicotiana alata (Winged tobacco).